The sequence spans 405 residues: Acetylornithine aminotransferase 1 (405 aa).

Pyridoxal 5'-phosphate is bound by residues 108–109 (GA) and Phe-141. Residue Arg-144 participates in N(2)-acetyl-L-ornithine binding. 226–229 (DEVQ) contributes to the pyridoxal 5'-phosphate binding site. At Lys-255 the chain carries N6-(pyridoxal phosphate)lysine. Residue Thr-283 coordinates N(2)-acetyl-L-ornithine. Thr-284 contacts pyridoxal 5'-phosphate.

It belongs to the class-III pyridoxal-phosphate-dependent aminotransferase family. ArgD subfamily. In terms of assembly, homodimer. Requires pyridoxal 5'-phosphate as cofactor.

It is found in the cytoplasm. The enzyme catalyses N(2)-acetyl-L-ornithine + 2-oxoglutarate = N-acetyl-L-glutamate 5-semialdehyde + L-glutamate. It functions in the pathway amino-acid biosynthesis; L-arginine biosynthesis; N(2)-acetyl-L-ornithine from L-glutamate: step 4/4. The chain is Acetylornithine aminotransferase 1 from Pseudomonas syringae pv. tomato (strain ATCC BAA-871 / DC3000).